Reading from the N-terminus, the 399-residue chain is PCI domain-containing protein 2 (399 aa).

Ala-2 is modified (N-acetylalanine). The residue at position 45 (Ser-45) is a Phosphoserine. The 182-residue stretch at 210–391 (ITYKYYVGRK…QKLVVSKQNP (182 aa)) folds into the PCI domain.

It belongs to the CSN12 family. Component of the nuclear pore complex (NPC)-associated TREX-2 complex (transcription and export complex 2), composed of at least GANP, 2 copies of ENY2, PCID2, SEM1/DSS1, and either centrin CETN2 or centrin CETN3. The TREX-2 complex also associates with ALYREF/ALY and with the nucleoporin NUP153. Interacts with BRCA2. Interacts with SRCAP chromatin remodeling complex component ZNHIT1; the interaction results in inhibition of SRCAP complex activity, preventing the deposition of histone variant H2AZ1/H2A.Z to lymphoid fate regulator genes and restricting lymphoid lineage commitment. Highly expressed in bone marrow and haematopoietic progenitor cells but is almost undetectable in mature blood cells.

Its subcellular location is the cytoplasm. It localises to the nucleus. The protein resides in the nuclear pore complex. Its function is as follows. Required for B-cell survival through the regulation of the expression of cell-cycle checkpoint MAD2L1 protein during B cell differentiation. As a component of the TREX-2 complex, involved in the export of mRNAs to the cytoplasm through the nuclear pores. Binds and stabilizes BRCA2 and is thus involved in the control of R-loop-associated DNA damage and transcription-associated genomic instability. Blocks the activity of the SRCAP chromatin remodeling complex by interacting with SRCAP complex member ZNHIT1 and inhibiting its interaction with the complex. This prevents the deposition of histone variant H2AZ1/H2A.Z at the nucleosomes of key lymphoid fate regulator genes which suppresses their expression and restricts lymphoid lineage commitment. This chain is PCI domain-containing protein 2 (Pcid2), found in Mus musculus (Mouse).